The following is a 61-amino-acid chain: Toxin S5C1 (61 aa).

Disulfide bonds link C3/C22, C16/C39, C41/C53, and C54/C59. The Cell attachment site motif lies at 45-47; it reads RGD.

It belongs to the three-finger toxin family. Short-chain subfamily. Antiplatelet toxin sub-subfamily. In terms of tissue distribution, expressed by the venom gland.

It is found in the secreted. Its function is as follows. Inhibits ADP-induced platelet aggregation and inhibits the binding of purified platelet fibrinogen receptor alpha-IIb/beta-3 (ITGA2B/ITGB3) to immobilized fibrinogen. The chain is Toxin S5C1 from Dendroaspis jamesoni kaimosae (Eastern Jameson's mamba).